A 253-amino-acid chain; its full sequence is Triosephosphate isomerase (253 aa).

9–11 contacts substrate; it reads NWK. His-95 acts as the Electrophile in catalysis. Glu-167 functions as the Proton acceptor in the catalytic mechanism. Residues Gly-173, Ser-213, and 234–235 contribute to the substrate site; that span reads GG. Residue Ser-213 is modified to Phosphoserine.

The protein belongs to the triosephosphate isomerase family. In terms of assembly, homodimer.

The protein resides in the cytoplasm. It catalyses the reaction D-glyceraldehyde 3-phosphate = dihydroxyacetone phosphate. It functions in the pathway carbohydrate biosynthesis; gluconeogenesis. It participates in carbohydrate degradation; glycolysis; D-glyceraldehyde 3-phosphate from glycerone phosphate: step 1/1. Involved in the gluconeogenesis. Catalyzes stereospecifically the conversion of dihydroxyacetone phosphate (DHAP) to D-glyceraldehyde-3-phosphate (G3P). The chain is Triosephosphate isomerase from Bacillus licheniformis (strain ATCC 14580 / DSM 13 / JCM 2505 / CCUG 7422 / NBRC 12200 / NCIMB 9375 / NCTC 10341 / NRRL NRS-1264 / Gibson 46).